Reading from the N-terminus, the 87-residue chain is FXYD domain-containing ion transport regulator 3 (87 aa).

The N-terminal stretch at 1-20 (MQKVTLGLLVFLAGFPVLDA) is a signal peptide. Over 21 to 38 (NDLEDKNSPFYYDWHSLQ) the chain is Extracellular. The helical transmembrane segment at 39 to 59 (VGGLICAGVLCAMGIIIVMSA) threads the bilayer. Over 60 to 87 (KCKCKFGQKSGHHPGETPPLITPGSAQS) the chain is Cytoplasmic. A disordered region spans residues 66–87 (GQKSGHHPGETPPLITPGSAQS).

The protein belongs to the FXYD family. Regulatory subunit of the sodium/potassium-transporting ATPase which is composed of a catalytic alpha subunit, a non-catalytic beta subunit and an additional regulatory subunit. Interacts with catalytic alpha subunit ATP1A1. Also interacts with non-catalytic beta subunit ATP1B1. Interacts with the ATP1A1-ATP1B1, ATP1A2-ATP1B1 and ATP1A3-ATP1B1 NKA isozymes. Glutathionylated. In terms of tissue distribution, isoform 1: Expressed mainly in differentiated cells (at protein level). Isoform 2: Expressed mainly in undifferentiated cells (at protein level).

It localises to the cell membrane. Associates with and regulates the activity of the sodium/potassium-transporting ATPase (NKA) which transports Na(+) out of the cell and K(+) into the cell. Reduces glutathionylation of the NKA beta-1 subunit ATP1B1, thus reversing glutathionylation-mediated inhibition of ATP1B1. Induces a hyperpolarization-activated chloride current when expressed in Xenopus oocytes. In terms of biological role, decreases the apparent K+ and Na+ affinity of the sodium/potassium-transporting ATPase over a large range of membrane potentials. Functionally, decreases the apparent K+ affinity of the sodium/potassium-transporting ATPase only at slightly negative and positive membrane potentials and increases the apparent Na+ affinity over a large range of membrane potentials. In Homo sapiens (Human), this protein is FXYD domain-containing ion transport regulator 3 (FXYD3).